A 95-amino-acid chain; its full sequence is Putative per-hexamer repeat protein 4 (95 aa).

This is Putative per-hexamer repeat protein 4 (Phxr4) from Mus musculus (Mouse).